Consider the following 171-residue polypeptide: Ribosome maturation factor RimM (171 aa).

The PRC barrel domain maps to 97-169 (DGEFYYHEII…RVDVSIMEGL (73 aa)).

The protein belongs to the RimM family. Binds ribosomal protein uS19.

It is found in the cytoplasm. Functionally, an accessory protein needed during the final step in the assembly of 30S ribosomal subunit, possibly for assembly of the head region. Essential for efficient processing of 16S rRNA. May be needed both before and after RbfA during the maturation of 16S rRNA. It has affinity for free ribosomal 30S subunits but not for 70S ribosomes. This is Ribosome maturation factor RimM from Lactococcus lactis subsp. lactis (strain IL1403) (Streptococcus lactis).